A 35-amino-acid chain; its full sequence is Turripeptide gsp9a (35 aa).

4-hydroxyproline is present on residues Pro3 and Pro4. Disulfide bonds link Cys7–Cys22, Cys12–Cys26, and Cys18–Cys33. 4-carboxyglutamate occurs at positions 14 and 17.

In terms of tissue distribution, expressed by the venom duct.

It is found in the secreted. In Gemmula speciosa (Splendid gem-turris), this protein is Turripeptide gsp9a.